The primary structure comprises 420 residues: Putative transporter AmpG 3 (420 aa).

Helical transmembrane passes span 6–26, 41–61, 79–99, 104–124, 141–161, 166–186, 230–250, 274–294, 297–317, 324–344, 359–381, and 386–406; these read YLIG…LIFF, IVGS…WSPF, GWAL…LKRS, LCIT…QDIV, IAFT…SVGA, IIFG…VGPI, LLLI…PMAM, LLIM…IGIF, VLIG…LATI, FIIT…IISI, YSIS…GICA, and WPVF…IFYI.

This sequence belongs to the major facilitator superfamily.

Its subcellular location is the cell inner membrane. This chain is Putative transporter AmpG 3 (ampG3), found in Rickettsia typhi (strain ATCC VR-144 / Wilmington).